A 451-amino-acid polypeptide reads, in one-letter code: 1,3-beta-glucanosyltransferase PGA4 (451 aa).

Residues 1–18 form the signal peptide; the sequence is MLFRSLVTYLSLVSSVLS. Tyrosine 81 is a binding site for (1,3-beta-D-glucosyl)n. An N-linked (GlcNAc...) asparagine glycan is attached at asparagine 88. (1,3-beta-D-glucosyl)n is bound by residues 108-116, asparagine 151, glutamate 152, and arginine 198; that span reads NTPHSSITR. Glutamate 152 serves as the catalytic Proton donor. Asparagine 245 carries an N-linked (GlcNAc...) asparagine glycan. Catalysis depends on glutamate 254, which acts as the Nucleophile. Position 286 (tyrosine 286) interacts with (1,3-beta-D-glucosyl)n. Residues 316–336 are disordered; it reads SQFEKTKNPSGDGGYLKSTGG. N-linked (GlcNAc...) asparagine glycosylation is found at asparagine 347, asparagine 394, and asparagine 422. The segment at 395 to 427 is disordered; the sequence is YTSSITASSRASPSQTSQVSSSSATSANSTSSK. Low complexity predominate over residues 396–426; it reads TSSITASSRASPSQTSQVSSSSATSANSTSS. Aspartate 430 carries GPI-anchor amidated aspartate lipidation. Positions 431-451 are cleaved as a propeptide — removed in mature form; it reads AAVEGAGFLSVIALAAGIALL.

The protein belongs to the glycosyl hydrolase 72 family. Post-translationally, the GPI-anchor is attached to the protein in the endoplasmic reticulum and serves to target the protein to the cell surface. There, the glucosamine-inositol phospholipid moiety is cleaved off and the GPI-modified mannoprotein is covalently attached via its lipidless GPI glycan remnant to the 1,6-beta-glucan of the outer cell wall layer.

Its subcellular location is the secreted. The protein resides in the cell wall. The protein localises to the membrane. In terms of biological role, splits internally a 1,3-beta-glucan molecule and transfers the newly generated reducing end (the donor) to the non-reducing end of another 1,3-beta-glucan molecule (the acceptor) forming a 1,3-beta linkage, resulting in the elongation of 1,3-beta-glucan chains in the cell wall. Involved in cell wall biosynthesis and morphogenesis. Plays a key role in virulence. The chain is 1,3-beta-glucanosyltransferase PGA4 (PGA4) from Candida albicans (strain SC5314 / ATCC MYA-2876) (Yeast).